A 182-amino-acid polypeptide reads, in one-letter code: Antigenic integral membrane glycoprotein (182 aa).

The first 35 residues, 1-35, serve as a signal peptide directing secretion; sequence MFSFHERMKKKHVTIRVYKHERILVFLFVLFISTT. N88 and N120 each carry an N-linked (GlcNAc...) asparagine glycan. The chain crosses the membrane as a helical span at residues 162 to 180; the sequence is EFLMSSCIVITLNLFIFMY. C168 carries S-palmitoyl cysteine lipidation.

It is found in the cell membrane. Its function is as follows. Major antigen in the surface tegument. The chain is Antigenic integral membrane glycoprotein from Schistosoma mansoni (Blood fluke).